The primary structure comprises 340 residues: Complement decay-accelerating factor (340 aa).

4 Sushi domains span residues 1 to 55 (VPNA…FCNR), 56 to 119 (SCEV…FCKK), 120 to 181 (KSCP…ECRE), and 182 to 244 (IYCP…ECRG). A disulfide bridge connects residues Cys24 and Cys53. Asn54 is a glycosylation site (N-linked (GlcNAc...) asparagine). Intrachain disulfides connect Cys57/Cys104, Cys88/Cys117, Cys122/Cys163, Cys149/Cys179, Cys184/Cys226, and Cys212/Cys242. N-linked (GlcNAc...) asparagine glycosylation occurs at Asn107. Positions 235–317 (WSGPPPECRG…SGTTSGTTSL (83 aa)) are disordered. Residues 246–268 (SLTSKVPPTVQKPTTVNVPTTEV) are compositionally biased toward polar residues. Low complexity-rich tracts occupy residues 269 to 287 (SPTS…AQAT) and 307 to 317 (GSGTTSGTTSL). The GPI-anchor amidated serine moiety is linked to residue Ser312. Residues 313–340 (GTTSLLSGHKCFTLTGLLGTLVTMGLLT) constitute a propeptide, removed in mature form.

Belongs to the receptors of complement activation (RCA) family. In terms of assembly, monomer (major form) and non-disulfide-linked, covalent homodimer (minor form). Interacts with ADGRE5. Post-translationally, the Ser/Thr-rich domain is heavily O-glycosylated.

Its subcellular location is the cell membrane. In terms of biological role, this protein recognizes C4b and C3b fragments that condense with cell-surface hydroxyl or amino groups when nascent C4b and C3b are locally generated during C4 and c3 activation. Interaction of daf with cell-associated C4b and C3b polypeptides interferes with their ability to catalyze the conversion of C2 and factor B to enzymatically active C2a and Bb and thereby prevents the formation of C4b2a and C3bBb, the amplification convertases of the complement cascade. Inhibits complement activation by destabilizing and preventing the formation of C3 and C5 convertases, which prevents complement damage. The protein is Complement decay-accelerating factor (CD55) of Pongo pygmaeus (Bornean orangutan).